Reading from the N-terminus, the 591-residue chain is MAERTHACGKVTVEAVGQTVQLKGWVQKRRDLGGLIFIDLRDRTGIVQVVFNPETSKEALEVAETIRSEYVLHVEGTVVERGEGAINDNMATGRIEVQASKVNVLNAAKTTPIIIADDTDASEDVRLKYRYLDLRRPAMFNTFKMRHDVTKTIRNFLDTEEFLEVETPILTKSTPEGARDYLVPSRVHDGEFYALPQSPQLFKQLLMVGGFERYYQVARCFRDEDLRADRQPEFTQIDIEASFLTQDEILEMMERMMTKVMKDAKGVEVSAPFPRMKYADAMARFGSDKPDTRFEMELKDLSEFAVGCGFKVFTSAVENGGQVKAINAKGAASKYSRKDIDALTEFAKVYGAKGLAWLKVEEDGLKGPIAKFFGEEEANVLMSTLEADAGDLLLFVADKKSVVADSLGALRLRLGKELELIDESKFNFLWVTDWPLLEYDEDADRYFAAHHPFTMPFREDVELLETAPEKARAQAYDLVLNGYELGGGSLRIYERDVQEKMFKALGFSQEEAQEQFGFLLEAFEYGTPPHGGIALGLDRLVMLLAGRTNLRDTIAFPKTASASCLLTEAPSPVAEAQLEELSLKLSLKEEK.

Residue Glu176 participates in L-aspartate binding. The segment at Gln200 to Lys203 is aspartate. Arg222 contacts L-aspartate. ATP is bound by residues Arg222–Glu224 and Gln231. His450 serves as a coordination point for L-aspartate. Residue Glu484 participates in ATP binding. Residue Arg491 participates in L-aspartate binding. Gly536 to Arg539 serves as a coordination point for ATP.

This sequence belongs to the class-II aminoacyl-tRNA synthetase family. Type 1 subfamily. In terms of assembly, homodimer.

The protein resides in the cytoplasm. The enzyme catalyses tRNA(Asx) + L-aspartate + ATP = L-aspartyl-tRNA(Asx) + AMP + diphosphate. Its function is as follows. Aspartyl-tRNA synthetase with relaxed tRNA specificity since it is able to aspartylate not only its cognate tRNA(Asp) but also tRNA(Asn). Reaction proceeds in two steps: L-aspartate is first activated by ATP to form Asp-AMP and then transferred to the acceptor end of tRNA(Asp/Asn). This Bacillus mycoides (strain KBAB4) (Bacillus weihenstephanensis) protein is Aspartate--tRNA(Asp/Asn) ligase.